Consider the following 290-residue polypeptide: Protease HtpX (290 aa).

The next 2 membrane-spanning stretches (helical) occupy residues 12 to 32 (IAVMVLISLVFSLFGFQGLLA) and 42 to 62 (ALLVYSAVIGFSGSIISLLIS). His-147 provides a ligand contact to Zn(2+). Glu-148 is a catalytic residue. His-151 lines the Zn(2+) pocket. The next 2 helical transmembrane spans lie at 162–182 (LIQGVLNTFVVFLSRVIGHVV) and 197–217 (FWIVSIISQVILGILASMIVM). Residue Glu-224 participates in Zn(2+) binding.

It belongs to the peptidase M48B family. Requires Zn(2+) as cofactor.

The protein localises to the cell inner membrane. The polypeptide is Protease HtpX (Pseudoalteromonas atlantica (strain T6c / ATCC BAA-1087)).